Here is a 1029-residue protein sequence, read N- to C-terminus: E3 ubiquitin-protein ligase UPL6 (1029 aa).

The segment at M1–T20 is disordered. The span at S8–T20 shows a compositional bias: basic and acidic residues. Residues Q45–C74 enclose the IQ domain. Positions S688 to S1029 constitute an HECT domain. Residue C997 is the Glycyl thioester intermediate of the active site.

The protein belongs to the UPL family.

The catalysed reaction is S-ubiquitinyl-[E2 ubiquitin-conjugating enzyme]-L-cysteine + [acceptor protein]-L-lysine = [E2 ubiquitin-conjugating enzyme]-L-cysteine + N(6)-ubiquitinyl-[acceptor protein]-L-lysine.. The protein operates within protein modification; protein ubiquitination. In terms of biological role, probable E3 ubiquitin-protein ligase which mediates ubiquitination and subsequent proteasomal degradation of target proteins. In Arabidopsis thaliana (Mouse-ear cress), this protein is E3 ubiquitin-protein ligase UPL6 (UPL6).